The chain runs to 854 residues: Discoidin domain-containing receptor 2 (854 aa).

An N-terminal signal peptide occupies residues 1-21 (MIPIPRMPLVLLLLLLILGSA). The Extracellular segment spans residues 22–399 (KAQVNPAICR…MLKVDDSNTR (378 aa)). The 156-residue stretch at 30–185 (CRYPLGMSGG…VCMRVELYGC (156 aa)) folds into the F5/8 type C domain. 2 disulfide bridges follow: C30–C185 and C73–C177. N-linked (GlcNAc...) asparagine glycans are attached at residues N121, N213, N261, N280, and N372. Residues 400-421 (ILIGCLVAIIFILLAIIVIILW) form a helical membrane-spanning segment. At 422 to 854 (RQFWQKMLEK…HLLLLQQGAE (433 aa)) the chain is on the cytoplasmic side. The interval 452–471 (SMFNNNRSSSPSEQESNSTY) is disordered. Residues 455–469 (NNNRSSSPSEQESNS) show a composition bias toward low complexity. Y471 bears the Phosphotyrosine; by SRC and autocatalysis mark. A Protein kinase domain is found at 563–848 (LAFKEKLGEG…PSFQEIHLLL (286 aa)). Residues 569–577 (LGEGQFGEV) and K608 contribute to the ATP site. The Proton acceptor role is filled by D709. 3 positions are modified to phosphotyrosine; by SRC and autocatalysis: Y735, Y739, and Y740.

It belongs to the protein kinase superfamily. Tyr protein kinase family. Insulin receptor subfamily. In terms of assembly, binds hydroxyproline-rich sequence motifs in fibrillar, glycosylated collagen, such as the GQOGVMGFO motif, where O stands for hydroxyproline. Interacts with SRC. Interacts (tyrosine phosphorylated) with SHC1. N-glycosylated. Post-translationally, tyrosine phosphorylated in response to collagen binding. Phosphorylated by SRC; this is required for activation and subsequent autophosphorylation on additional tyrosine residues. Widely expressed. Detected in lung, ovary, skin and in testis Leydig cells (at protein level). Widely expressed. Detected at high levels in heart, lung, skeletal muscle, central nervous system (CNS) and kidney, and at lower levels in brain and testis. Detected in chondrocytes in tibia growth plates of young mice.

Its subcellular location is the cell membrane. It carries out the reaction L-tyrosyl-[protein] + ATP = O-phospho-L-tyrosyl-[protein] + ADP + H(+). With respect to regulation, present in an inactive state in the absence of collagen binding and phosphorylation by SRC. Tyrosine phosphorylation enhances the affinity for ATP and the catalytic activity. Functionally, tyrosine kinase that functions as a cell surface receptor for fibrillar collagen and regulates cell differentiation, remodeling of the extracellular matrix, cell migration and cell proliferation. Required for normal bone development. Regulates osteoblast differentiation and chondrocyte maturation via a signaling pathway that involves MAP kinases and leads to the activation of the transcription factor RUNX2. Regulates remodeling of the extracellular matrix by up-regulation of the collagenases MMP1, MMP2 and MMP13, and thereby facilitates cell migration and tumor cell invasion. Promotes fibroblast migration and proliferation, and thereby contributes to cutaneous wound healing. In Mus musculus (Mouse), this protein is Discoidin domain-containing receptor 2 (Ddr2).